Consider the following 622-residue polypeptide: Apical membrane antigen 1 (622 aa).

The N-terminal stretch at 1–24 is a signal peptide; the sequence is MRKLYCVLLLSAFEFTYMINFGRG. At 25–546 the chain is on the extracellular side; it reads QNYWEHPYQN…EHKPTYDNMK (522 aa). Disulfide bonds link Cys-149–Cys-302, Cys-217–Cys-247, Cys-263–Cys-275, Cys-320–Cys-418, and Cys-337–Cys-409. Asn-286, Asn-371, Asn-421, Asn-422, and Asn-499 each carry an N-linked (GlcNAc...) asparagine glycan. Intrachain disulfides connect Cys-443–Cys-502, Cys-490–Cys-507, and Cys-492–Cys-509. The chain crosses the membrane as a helical span at residues 547-567; the sequence is IIIASSAAVAVLATILMVYLY. Topologically, residues 568–622 are cytoplasmic; that stretch reads KRKGNAEKYDKMDEPQDYGKSTSRNDEMLDPEASFWGEEKRASHTTPVLMEKPYY. The interval 577-607 is disordered; that stretch reads DKMDEPQDYGKSTSRNDEMLDPEASFWGEEK.

This sequence belongs to the apicomplexan parasites AMA1 family.

Its subcellular location is the membrane. Its function is as follows. Involved in parasite invasion of erythrocytes. The protein is Apical membrane antigen 1 (AMA-1) of Plasmodium falciparum (isolate thtn / Thailand).